The following is a 159-amino-acid chain: Nucleotide-binding protein Avin_13410 (159 aa).

The protein belongs to the YajQ family.

Nucleotide-binding protein. This chain is Nucleotide-binding protein Avin_13410, found in Azotobacter vinelandii (strain DJ / ATCC BAA-1303).